A 294-amino-acid chain; its full sequence is 26S proteasome regulatory subunit RPN11 (294 aa).

The MPN domain maps to valine 21–glutamine 156. 3 residues coordinate Zn(2+): histidine 103, histidine 105, and aspartate 116. The short motif at histidine 103–aspartate 116 is the JAMM motif element.

This sequence belongs to the peptidase M67A family. The 26S proteasome consists of a 20S proteasome core and two 19S regulatory subunits. The 20S proteasome core is composed of 28 subunits that are arranged in four stacked rings, resulting in a barrel-shaped structure. The two end rings are each formed by seven alpha subunits, and the two central rings are each formed by seven beta subunits. The catalytic chamber with the active sites is on the inside of the barrel.

The protein localises to the cytoplasm. It localises to the nucleus. Functionally, acts as a regulatory subunit of the 26S proteasome which degrades poly-ubiquitinated proteins in the cytoplasm and in the nucleus. It is essential for the regulated turnover of proteins and for the removal of misfolded proteins. The proteasome is a multicatalytic proteinase complex that is characterized by its ability to cleave peptides with Arg, Phe, Tyr, Leu, and Glu adjacent to the leaving group at neutral or slightly basic pH. The sequence is that of 26S proteasome regulatory subunit RPN11 (RPN11) from Encephalitozoon cuniculi (strain GB-M1) (Microsporidian parasite).